Reading from the N-terminus, the 185-residue chain is Peptidyl-tRNA hydrolase (185 aa).

Y14 contacts tRNA. Residue H19 is the Proton acceptor of the active site. TRNA is bound by residues Y64, N66, and N112.

The protein belongs to the PTH family. As to quaternary structure, monomer.

The protein resides in the cytoplasm. It carries out the reaction an N-acyl-L-alpha-aminoacyl-tRNA + H2O = an N-acyl-L-amino acid + a tRNA + H(+). Its function is as follows. Hydrolyzes ribosome-free peptidyl-tRNAs (with 1 or more amino acids incorporated), which drop off the ribosome during protein synthesis, or as a result of ribosome stalling. Catalyzes the release of premature peptidyl moieties from peptidyl-tRNA molecules trapped in stalled 50S ribosomal subunits, and thus maintains levels of free tRNAs and 50S ribosomes. The sequence is that of Peptidyl-tRNA hydrolase from Lactobacillus acidophilus (strain ATCC 700396 / NCK56 / N2 / NCFM).